We begin with the raw amino-acid sequence, 264 residues long: Thymidylate synthase (264 aa).

Arginine 21 serves as a coordination point for dUMP. A (6R)-5,10-methylene-5,6,7,8-tetrahydrofolate-binding site is contributed by histidine 51. 126–127 (RR) is a binding site for dUMP. The active-site Nucleophile is the cysteine 146. Residues 166–169 (RSAD), asparagine 177, and 207–209 (HLY) each bind dUMP. Aspartate 169 provides a ligand contact to (6R)-5,10-methylene-5,6,7,8-tetrahydrofolate. Residue alanine 263 participates in (6R)-5,10-methylene-5,6,7,8-tetrahydrofolate binding.

The protein belongs to the thymidylate synthase family. Bacterial-type ThyA subfamily. Homodimer.

The protein resides in the cytoplasm. The catalysed reaction is dUMP + (6R)-5,10-methylene-5,6,7,8-tetrahydrofolate = 7,8-dihydrofolate + dTMP. Its pathway is pyrimidine metabolism; dTTP biosynthesis. Catalyzes the reductive methylation of 2'-deoxyuridine-5'-monophosphate (dUMP) to 2'-deoxythymidine-5'-monophosphate (dTMP) while utilizing 5,10-methylenetetrahydrofolate (mTHF) as the methyl donor and reductant in the reaction, yielding dihydrofolate (DHF) as a by-product. This enzymatic reaction provides an intracellular de novo source of dTMP, an essential precursor for DNA biosynthesis. The sequence is that of Thymidylate synthase from Chromobacterium violaceum (strain ATCC 12472 / DSM 30191 / JCM 1249 / CCUG 213 / NBRC 12614 / NCIMB 9131 / NCTC 9757 / MK).